The primary structure comprises 265 residues: uncharacterized protein (265 aa).

CBS domains lie at 9-64 (MTKK…EKVE) and 67-126 (MTKR…TTPK).

This is an uncharacterized protein from Methanocaldococcus jannaschii (strain ATCC 43067 / DSM 2661 / JAL-1 / JCM 10045 / NBRC 100440) (Methanococcus jannaschii).